A 308-amino-acid chain; its full sequence is MKEEKQLDLVIIGAGPAGLTAAIYAIRAKLNTLVLENELVGGQIRETYTVENFPGFNVISGADLADKMEEHAASIGVNIDQFSNIEKIKLSDDEKIIETEDVIYKVKALIIATGAKSRRLPIPEEEKLHGKVIHYCELCDGALYQGKDLVVVGGGNSAVEAAIFLTKYARNITIVHQFDYLQAQKYSQDELFKHKNVKIIWDSEIRNIVGENEIEKIVVENVKTKQKTELKADGVFVYIGYEPKTELFKDSININKWGYIETDENMETNIKGVFAAGDVRSKLIRQLTTAVSDGTVAALMAEKYIGGK.

An intrachain disulfide couples C136 to C139. FAD is bound at residue 268–278 (TNIKGVFAAGD).

It belongs to the class-II pyridine nucleotide-disulfide oxidoreductase family.

This is 34.2 kDa protein in rubredoxin operon from Clostridium pasteurianum.